Reading from the N-terminus, the 275-residue chain is Pyridoxal phosphate homeostasis protein (275 aa).

Position 6 is a phosphoserine (serine 6). The residue at position 47 (lysine 47) is an N6-(pyridoxal phosphate)lysine. Tyrosine 69 carries the phosphotyrosine modification. Position 125 is an N6-succinyllysine (lysine 125). A phosphoserine mark is found at serine 226 and serine 244. Positions 251–263 (DYSKKPTPDKCAA) are enriched in basic and acidic residues. The interval 251-275 (DYSKKPTPDKCAADVKAPLEVAQEH) is disordered.

This sequence belongs to the pyridoxal phosphate-binding protein YggS/PROSC family. As to expression, ubiquitous.

Its function is as follows. Pyridoxal 5'-phosphate (PLP)-binding protein, which may be involved in intracellular homeostatic regulation of pyridoxal 5'-phosphate (PLP), the active form of vitamin B6. This chain is Pyridoxal phosphate homeostasis protein, found in Homo sapiens (Human).